The sequence spans 366 residues: uncharacterized protein (366 aa).

The PINc domain maps to 169-280; the sequence is ILDTSVIIDG…LNKVCELQKV (112 aa). Position 250 (D250) interacts with Mg(2+). Positions 295-356 constitute a TRAM domain; that stretch reads VVLPGEEMNV…LQTAAGRMIF (62 aa).

This sequence belongs to the ycf81 family. In the central section; belongs to the PINc/VapC protein family. It depends on Mg(2+) as a cofactor.

In terms of biological role, an RNase. This is an uncharacterized protein from Bacillus subtilis (strain 168).